Consider the following 357-residue polypeptide: GDSL esterase/lipase At5g45950 (357 aa).

The first 23 residues, 1-23 (MLLVAFVTLLVAVALQPLPSVLS), serve as a signal peptide directing secretion. An N-linked (GlcNAc...) asparagine glycan is attached at asparagine 37. Serine 47 acts as the Nucleophile in catalysis. Residue asparagine 132 is glycosylated (N-linked (GlcNAc...) asparagine). Active-site residues include aspartate 331 and histidine 334.

Belongs to the 'GDSL' lipolytic enzyme family.

The protein localises to the secreted. The protein is GDSL esterase/lipase At5g45950 of Arabidopsis thaliana (Mouse-ear cress).